The following is a 356-amino-acid chain: Phosphoserine aminotransferase (356 aa).

Residue Arg41 coordinates L-glutamate. Residues 76–77 (AS), Trp102, Thr150, Asp169, and Gln192 each bind pyridoxal 5'-phosphate. Residue Lys193 is modified to N6-(pyridoxal phosphate)lysine. Pyridoxal 5'-phosphate is bound at residue 234–235 (NT).

Belongs to the class-V pyridoxal-phosphate-dependent aminotransferase family. SerC subfamily. As to quaternary structure, homodimer. The cofactor is pyridoxal 5'-phosphate.

It is found in the cytoplasm. The catalysed reaction is O-phospho-L-serine + 2-oxoglutarate = 3-phosphooxypyruvate + L-glutamate. The enzyme catalyses 4-(phosphooxy)-L-threonine + 2-oxoglutarate = (R)-3-hydroxy-2-oxo-4-phosphooxybutanoate + L-glutamate. It participates in amino-acid biosynthesis; L-serine biosynthesis; L-serine from 3-phospho-D-glycerate: step 2/3. The protein operates within cofactor biosynthesis; pyridoxine 5'-phosphate biosynthesis; pyridoxine 5'-phosphate from D-erythrose 4-phosphate: step 3/5. In terms of biological role, catalyzes the reversible conversion of 3-phosphohydroxypyruvate to phosphoserine and of 3-hydroxy-2-oxo-4-phosphonooxybutanoate to phosphohydroxythreonine. This is Phosphoserine aminotransferase from Flavobacterium psychrophilum (strain ATCC 49511 / DSM 21280 / CIP 103535 / JIP02/86).